The primary structure comprises 927 residues: DNA-binding protein RFX6 (927 aa).

Disordered regions lie at residues 1 to 21 (MAKV…PQLP) and 81 to 108 (NFSS…QKKS). The segment at residues 123 to 198 (TLQWLEDNYI…YHYYGIGIKE (76 aa)) is a DNA-binding region (RFX-type winged-helix).

This sequence belongs to the RFX family. In terms of assembly, interacts with RFX3. As to expression, in the adult pancreas, expression is restricted to the islets where it could be detected in all endocrine lineages.

Its subcellular location is the nucleus. In terms of biological role, transcription factor required to direct islet cell differentiation during endocrine pancreas development. Specifically required for the differentiation of 4 of the 5 islet cell types and for the production of insulin. Not required for pancreatic PP (polypeptide-producing) cells differentiation. Acts downstream of NEUROG3 and regulates the transcription factors involved in beta-cell maturation and function, thereby restricting the expression of the beta-cell differentiation and specification genes, and thus the beta-cell fate choice. Activates transcription by forming a heterodimer with RFX3 and binding to the X-box in the promoter of target genes. Involved in glucose-stimulated insulin secretion by promoting insulin and L-type calcium channel gene transcription. This chain is DNA-binding protein RFX6 (Rfx6), found in Mus musculus (Mouse).